Consider the following 436-residue polypeptide: 3-ketoacyl-CoA thiolase (436 aa).

Residue cysteine 99 is the Acyl-thioester intermediate of the active site. Active-site proton acceptor residues include histidine 392 and cysteine 422.

This sequence belongs to the thiolase-like superfamily. Thiolase family. Heterotetramer of two alpha chains (FadJ) and two beta chains (FadI).

Its subcellular location is the cytoplasm. The catalysed reaction is an acyl-CoA + acetyl-CoA = a 3-oxoacyl-CoA + CoA. The protein operates within lipid metabolism; fatty acid beta-oxidation. Catalyzes the final step of fatty acid oxidation in which acetyl-CoA is released and the CoA ester of a fatty acid two carbons shorter is formed. The polypeptide is 3-ketoacyl-CoA thiolase (Yersinia pestis bv. Antiqua (strain Angola)).